The chain runs to 1621 residues: ABC transporter A family member 2 (1621 aa).

7 helical membrane-spanning segments follow: residues 30-50, 234-254, 276-296, 309-329, 338-358, 365-385, and 405-425; these read ILFPIIVILVIFAILVLVMAF, SVFITAALMIFGFRLITDLVI, ISWMITSLVTALPVNLIISII, GVVIFTLILYLLTLLLLAFIL, FCGLLSFVIIIAINIGGIFVA, GAKLFLCLISPIAIACSIFAM, and NQVIGMLVLDIFFYIFLVWYL. Positions 484 to 717 constitute an ABC transporter 1 domain; sequence ISIRNLRKEY…FGCGYLLTCS (234 aa). ATP is bound at residue 520–527; that stretch reads GPNGSGKS. 7 helical membrane-spanning segments follow: residues 856 to 876, 1033 to 1053, 1083 to 1103, 1111 to 1131, 1142 to 1162, 1183 to 1203, and 1227 to 1247; these read FFLTLVIPLVFIIGSIIMYKA, IVYFIIIMMAGYALMAGSFAG, VWDYFFSFILILLTTCILAGI, FGLMFLCLILFCVSVVPLSYL, ATGAITAIHFAIGIIFVIISL, VDIVFCILSPLFAYSRILFLV, and GSPMIILAAHCIVWVSWIMIL. In terms of domain architecture, ABC transporter 2 spans 1293 to 1528; the sequence is LQFRNLHKLF…FGAGYTFDVK (236 aa). 1331–1338 lines the ATP pocket; that stretch reads GLNGAGKT.

The protein belongs to the ABC transporter superfamily. ABCA family.

It localises to the membrane. This is ABC transporter A family member 2 (abcA2) from Dictyostelium discoideum (Social amoeba).